An 87-amino-acid polypeptide reads, in one-letter code: Kappa-bungarotoxin (87 aa).

An N-terminal signal peptide occupies residues 1 to 21 (MKTLLLTLVVVTIVCLDLGYT). Disulfide bonds link cysteine 24–cysteine 42, cysteine 35–cysteine 63, cysteine 48–cysteine 52, cysteine 67–cysteine 79, and cysteine 80–cysteine 85.

It belongs to the three-finger toxin family. Long-chain subfamily. Kappa-neurotoxin sub-subfamily. In terms of assembly, homodimer and heterodimer; non-covalently linked. In terms of tissue distribution, expressed by the venom gland.

The protein resides in the secreted. In terms of biological role, postsynaptic neurotoxin that binds and inhibits neuronal nicotinic acetylcholine receptors (nAChR) with high affinity (IC(50)&lt;100 nM). Is a selective, and slowly reversible antagonist of alpha-3/CHRNA3-containing and some alpha-4/CHRNA4-containing AChRs. This chain is Kappa-bungarotoxin, found in Bungarus multicinctus (Many-banded krait).